Here is a 151-residue protein sequence, read N- to C-terminus: MESPIRFENVDINTILKTLPHRFPFLLIDRVINIREDYSGIGIKNVTVNEPAFQGHFPERPVYPGVLMIEGMAQTAGVIGILSVTGTEKPRAVYFLTIDKCKFRKPVMPGDTVEYHLTRTGRRKTMWWFHGEAKVDGQIVAEADVGAMLAD.

His56 is a catalytic residue.

The protein belongs to the thioester dehydratase family. FabZ subfamily.

It is found in the cytoplasm. The enzyme catalyses a (3R)-hydroxyacyl-[ACP] = a (2E)-enoyl-[ACP] + H2O. In terms of biological role, involved in unsaturated fatty acids biosynthesis. Catalyzes the dehydration of short chain beta-hydroxyacyl-ACPs and long chain saturated and unsaturated beta-hydroxyacyl-ACPs. The protein is 3-hydroxyacyl-[acyl-carrier-protein] dehydratase FabZ of Rhodopseudomonas palustris (strain ATCC BAA-98 / CGA009).